The sequence spans 400 residues: MAKEKFVRSKPHLNVGTIGHIDHGKTTLTAAITKYLSFFGRADYTPYEQIDKAPEEKERGITINISHIEYETETRHYAHIDCPGHADYIKNMITGAAQMDGAILVVAATDGPMPQTREHVLLARQVNVPAMIVFINKTDMVDDEELIDLVEMEVRELLNKYEFPGDDLPVVRGSALKAVEGPDDPNDPVYAPIKELLDTMDSYFPEPQRETDKPFLMPVEDVFSITGRGTVVTGRIERGVIRPGDEVEIIGMSYDIKKTVVTSVEMFRKILDEGLAGDNVGCLLRGIDKDEVERGQVLAKPGSITPHTTFKAQVYVLKKEEGGRHTPFQKGYKPQFFIRTADVTGELIDFPAGVEMVMPGDNVEMTIKLIYPVAIEEGMRFAIREGGRTVGAGVVTAIVE.

Residues 10–208 (KPHLNVGTIG…TMDSYFPEPQ (199 aa)) enclose the tr-type G domain. The interval 19–26 (GHIDHGKT) is G1. GTP is bound at residue 19-26 (GHIDHGKT). Position 26 (threonine 26) interacts with Mg(2+). Positions 60 to 64 (GITIN) are G2. The G3 stretch occupies residues 81–84 (DCPG). Residues 81–85 (DCPGH) and 136–139 (NKTD) contribute to the GTP site. The segment at 136–139 (NKTD) is G4. Positions 174–176 (SAL) are G5.

It belongs to the TRAFAC class translation factor GTPase superfamily. Classic translation factor GTPase family. EF-Tu/EF-1A subfamily. Monomer.

It is found in the cytoplasm. The enzyme catalyses GTP + H2O = GDP + phosphate + H(+). Functionally, GTP hydrolase that promotes the GTP-dependent binding of aminoacyl-tRNA to the A-site of ribosomes during protein biosynthesis. This Thermosipho africanus (strain TCF52B) protein is Elongation factor Tu.